The following is a 503-amino-acid chain: GTPase Obg (503 aa).

Residues 2 to 159 enclose the Obg domain; it reads PQFVDRVVLH…KDVILELKSM (158 aa). The 181-residue stretch at 160 to 340 folds into the OBG-type G domain; sequence ADVGLVGFPS…LKYALMDIVK (181 aa). Residues 166 to 173, 191 to 195, 212 to 215, 292 to 295, and 321 to 323 contribute to the GTP site; these read GFPSAGKS, FTTLV, DVPG, NKMD, and STV. 2 residues coordinate Mg(2+): Ser173 and Thr193. Residues 371 to 444 form the OCT domain; that stretch reads EFEVEADPSA…IGEITFEWDP (74 aa). The segment covering 457 to 476 has biased composition (basic and acidic residues); it reads RGTDVRLEQNTRATPEERKR. The tract at residues 457-503 is disordered; that stretch reads RGTDVRLEQNTRATPEERKRASQARRGLIDENDFGDGEVAERERWQG.

The protein belongs to the TRAFAC class OBG-HflX-like GTPase superfamily. OBG GTPase family. Monomer. Mg(2+) is required as a cofactor.

The protein localises to the cytoplasm. In terms of biological role, an essential GTPase which binds GTP, GDP and possibly (p)ppGpp with moderate affinity, with high nucleotide exchange rates and a fairly low GTP hydrolysis rate. Plays a role in control of the cell cycle, stress response, ribosome biogenesis and in those bacteria that undergo differentiation, in morphogenesis control. This chain is GTPase Obg, found in Corynebacterium jeikeium (strain K411).